The chain runs to 427 residues: Adenylosuccinate synthetase (427 aa).

GTP-binding positions include 12–18 (GDEGKGK) and 40–42 (GHT). The active-site Proton acceptor is Asp-13. Mg(2+) contacts are provided by Asp-13 and Gly-40. Residues 13–16 (DEGK), 38–41 (NAGH), Thr-128, Arg-142, Gln-223, Thr-238, and Arg-302 contribute to the IMP site. The active-site Proton donor is the His-41. Residue 298–304 (TTTGRPR) participates in substrate binding. GTP is bound by residues Arg-304, 330–332 (KLD), and 412–414 (GVG).

The protein belongs to the adenylosuccinate synthetase family. In terms of assembly, homodimer. The cofactor is Mg(2+).

The protein resides in the cytoplasm. The enzyme catalyses IMP + L-aspartate + GTP = N(6)-(1,2-dicarboxyethyl)-AMP + GDP + phosphate + 2 H(+). The protein operates within purine metabolism; AMP biosynthesis via de novo pathway; AMP from IMP: step 1/2. Functionally, plays an important role in the de novo pathway of purine nucleotide biosynthesis. Catalyzes the first committed step in the biosynthesis of AMP from IMP. The protein is Adenylosuccinate synthetase of Pelotomaculum thermopropionicum (strain DSM 13744 / JCM 10971 / SI).